Here is a 386-residue protein sequence, read N- to C-terminus: 11-beta-hydroxysteroid dehydrogenase type 2 (386 aa).

82–111 (TRAVLITGCDTGFGKETAKKLDAMGFTVLA) is an NAD(+) binding site. Residue Ser219 coordinates substrate. Tyr232 functions as the Proton acceptor in the catalytic mechanism.

The protein belongs to the short-chain dehydrogenases/reductases (SDR) family. As to quaternary structure, interacts with ligand-free cytoplasmic NR3C2. As to expression, highly expressed in kidney. Also found in colon and small intestine. Not expressed in the adrenal gland. Expressed in uterus.

It is found in the microsome. It localises to the endoplasmic reticulum. The enzyme catalyses an 11beta-hydroxysteroid + NAD(+) = an 11-oxosteroid + NADH + H(+). The catalysed reaction is corticosterone + NAD(+) = 11-dehydrocorticosterone + NADH + H(+). It carries out the reaction 11beta,17beta-dihydroxyandrost-4-ene-3-one + NAD(+) = 17beta-hydroxyandrost-4-ene-3,11-dione + NADH + H(+). It catalyses the reaction 11beta-hydroxyandrost-4-ene-3,17-dione + NAD(+) = androst-4-ene-3,11,17-trione + NADH + H(+). It participates in steroid metabolism. Its activity is regulated as follows. Inhibited by glycyrrhetinic acid. Induced by progesterone, through the Ihh signaling pathway. Its function is as follows. Catalyzes the conversion of biologically active 11beta-hydroxyglucocorticoids (11beta-hydroxysteroid) such as corticosterone, to inactive 11-ketoglucocorticoids (11-oxosteroid) such as 11-dehydrocorticosterone, in the presence of NAD(+). Functions as a dehydrogenase (oxidase), thereby decreasing the concentration of active glucocorticoids, thus protecting the nonselective mineralocorticoid receptor from occupation by glucocorticoids. Plays an important role in maintaining glucocorticoids balance during preimplantation and protects the fetus from excessive maternal corticosterone exposure. Catalyzes the oxidation of 11beta-hydroxytestosterone (11beta,17beta-dihydroxyandrost-4-ene-3-one) to 11-ketotestosterone (17beta-hydroxyandrost-4-ene-3,11-dione), a major bioactive androgen. Catalyzes the conversion of 11beta-hydroxyandrostenedione (11beta-hydroxyandrost-4-ene-3,17-dione) to 11-ketoandrostenedione (androst-4-ene-3,11,17-trione), which can be further metabolized to 11-ketotestosterone. Converts 7-beta-25-dihydroxycholesterol to 7-oxo-25-hydroxycholesterol in vitro. 7-beta-25-dihydroxycholesterol (not 7-oxo-25-hydroxycholesterol) acts as a ligand for the G-protein-coupled receptor (GPCR) Epstein-Barr virus-induced gene 2 (EBI2) and may thereby regulate immune cell migration. This Mus musculus (Mouse) protein is 11-beta-hydroxysteroid dehydrogenase type 2 (Hsd11b2).